The primary structure comprises 275 residues: Diaminopimelate epimerase (275 aa).

Asparagine 12, glutamine 45, and asparagine 65 together coordinate substrate. The Proton donor role is filled by cysteine 74. Residues 75–76, asparagine 158, asparagine 191, and 209–210 each bind substrate; these read GN and ER. Cysteine 218 (proton acceptor) is an active-site residue. 219 to 220 contributes to the substrate binding site; sequence GT.

Belongs to the diaminopimelate epimerase family. As to quaternary structure, homodimer.

The protein resides in the cytoplasm. It catalyses the reaction (2S,6S)-2,6-diaminopimelate = meso-2,6-diaminopimelate. It participates in amino-acid biosynthesis; L-lysine biosynthesis via DAP pathway; DL-2,6-diaminopimelate from LL-2,6-diaminopimelate: step 1/1. Catalyzes the stereoinversion of LL-2,6-diaminopimelate (L,L-DAP) to meso-diaminopimelate (meso-DAP), a precursor of L-lysine and an essential component of the bacterial peptidoglycan. In Shewanella frigidimarina (strain NCIMB 400), this protein is Diaminopimelate epimerase.